We begin with the raw amino-acid sequence, 345 residues long: N-malonyltransferase FDB2 (345 aa).

The active-site Acyl-thioester intermediate is Cys-110. Catalysis depends on His-158, which acts as the Proton acceptor. The active site involves Asp-173.

Belongs to the arylamine N-acetyltransferase family.

Its pathway is xenobiotic degradation. In terms of biological role, N-malonyltransferase; part of the Fusarium detoxification of benzoxazolinone cluster 2 (FDB2) involved in the degradation of benzoxazolinones produced by the host plant. Maize, wheat, and rye produce the 2 benzoxazinone phytoanticipins 2,4-dihy-droxy-7-methoxy-1,4-benzoxazin-3-one (DIMBOA) and 2,4-dihydroxy-1,4-benzoxazin-3-one (DIBOA) that, due to their inherent instability once released, spontaneously degrade to the more stable corresponding benzoxazolinones, 6-methoxy-2-benzoxazolinone (MBOA) and 2-benzoxazolinone (BOA), respectively. The first step in the detoxification of benzoxazolinones involves the hydrolysis of the cyclic ester bond of benzoxazolinones by the FDB1 cluster gamma-lactamase MBL1 to aminophenols. MBL1 is able to convert BOA into 2-aminophenol (2-AP), as well as MBOA into 5-methoxy-2-aminophenol (2-AMP). The FDB2 cluster N-malonyltransferase FDB2/NAT1 then metabolizes aminophenols via N-malonylation to non-toxic malonamic acids. FDB2/NAT1 converts 2-AP into N-(2-hydroxyphenyl) malonamic acid (HPMA) and 2-AMP into N-(2-hydroxy-4-methoxyphenyl) malonamic acid (HMPMA). The duplicated dienlactone hydrolases DLH1 and DLH2 may provide redundant function for hydrolyzing the lactone moiety in the BOA molecule. The roles of the amidases an other enzymes encoded by the 2 FDB clusters have not been identified so far. The sequence is that of N-malonyltransferase FDB2 from Gibberella moniliformis (strain M3125 / FGSC 7600) (Maize ear and stalk rot fungus).